We begin with the raw amino-acid sequence, 407 residues long: Probable tRNA sulfurtransferase (407 aa).

Residues 61–165 enclose the THUMP domain; sequence NEITNRLSKI…LDAIYMYEEV (105 aa). ATP-binding positions include 183–184, 208–209, R265, G287, and Q296; these read ML and HF.

Belongs to the ThiI family.

The protein resides in the cytoplasm. It catalyses the reaction [ThiI sulfur-carrier protein]-S-sulfanyl-L-cysteine + a uridine in tRNA + 2 reduced [2Fe-2S]-[ferredoxin] + ATP + H(+) = [ThiI sulfur-carrier protein]-L-cysteine + a 4-thiouridine in tRNA + 2 oxidized [2Fe-2S]-[ferredoxin] + AMP + diphosphate. The catalysed reaction is [ThiS sulfur-carrier protein]-C-terminal Gly-Gly-AMP + S-sulfanyl-L-cysteinyl-[cysteine desulfurase] + AH2 = [ThiS sulfur-carrier protein]-C-terminal-Gly-aminoethanethioate + L-cysteinyl-[cysteine desulfurase] + A + AMP + 2 H(+). It functions in the pathway cofactor biosynthesis; thiamine diphosphate biosynthesis. In terms of biological role, catalyzes the ATP-dependent transfer of a sulfur to tRNA to produce 4-thiouridine in position 8 of tRNAs, which functions as a near-UV photosensor. Also catalyzes the transfer of sulfur to the sulfur carrier protein ThiS, forming ThiS-thiocarboxylate. This is a step in the synthesis of thiazole, in the thiamine biosynthesis pathway. The sulfur is donated as persulfide by IscS. This Staphylococcus aureus (strain MRSA252) protein is Probable tRNA sulfurtransferase.